Here is a 337-residue protein sequence, read N- to C-terminus: DNA-directed RNA polymerase subunit alpha (337 aa).

The tract at residues 1 to 233 (MIQKNWQELI…DQLSVFVNFK (233 aa)) is alpha N-terminal domain (alpha-NTD). Residues 249 to 337 (FNPALLKKVD…DLAKHYEDQY (89 aa)) are alpha C-terminal domain (alpha-CTD).

The protein belongs to the RNA polymerase alpha chain family. Homodimer. The RNAP catalytic core consists of 2 alpha, 1 beta, 1 beta' and 1 omega subunit. When a sigma factor is associated with the core the holoenzyme is formed, which can initiate transcription.

It catalyses the reaction RNA(n) + a ribonucleoside 5'-triphosphate = RNA(n+1) + diphosphate. Its function is as follows. DNA-dependent RNA polymerase catalyzes the transcription of DNA into RNA using the four ribonucleoside triphosphates as substrates. The sequence is that of DNA-directed RNA polymerase subunit alpha from Bartonella bacilliformis (strain ATCC 35685 / KC583 / Herrer 020/F12,63).